Consider the following 1014-residue polypeptide: Probable transport protein MmpL11 (1014 aa).

The next 12 membrane-spanning stretches (helical) occupy residues 13–33 (WLVFTGWLLALVPAIYLAMTQ), 156–173 (VRLYVIGQGALSAAVAAN), 188–208 (IILIVLLAVFGSLAAAAVPLA), 235–255 (TSTVSMFGIALAVDYSLFILM), 279–299 (GLAVVLSGMTVIASLTGIYLI), 311–331 (AILAVAIAMLASITLTPAALA), 373–393 (ASAASTILIIMATPVTSMMLG), 530–550 (TEPLMLVFVALIAFVMLLISI), 560–580 (VLMTLLSVAAAYGSLVMVFQW), 598–618 (VPPLVLAMTFGLSMDYEIFLL), 649–669 (AALIMIAVFVGFAFAGMPLVA), and 671–691 (IGVACAVAIAVDVTAVRLVLV). Residues 783–802 (SDRVLPGAATQESEEDPAMG) form a disordered region.

It belongs to the resistance-nodulation-cell division (RND) (TC 2.A.6) family. MmpL subfamily.

It localises to the cell membrane. The chain is Probable transport protein MmpL11 (mmpL11) from Mycobacterium leprae (strain TN).